A 175-amino-acid polypeptide reads, in one-letter code: Nudix hydrolase 25 (175 aa).

One can recognise a Nudix hydrolase domain in the interval 7-155 (GYRPNVGVCL…KRPTYEEVIK (149 aa)). Mn(2+)-binding residues include Gly40, Glu55, and Glu59. Positions 40–61 (GGIEDGEDPKSAAMRELQEETG) match the Nudix box motif.

The protein belongs to the Nudix hydrolase family. Mn(2+) is required as a cofactor.

It carries out the reaction P(1),P(4)-bis(5'-guanosyl) tetraphosphate + H2O = GMP + GTP + 2 H(+). Mediates the hydrolysis of diadenosine 5',5''-P(1)P(4) tetraphosphate (Ap(4)A), a signaling molecule involved in regulation of DNA replication and repair. This chain is Nudix hydrolase 25, found in Arabidopsis thaliana (Mouse-ear cress).